Reading from the N-terminus, the 520-residue chain is Bifunctional purine biosynthesis protein PurH (520 aa).

An MGS-like domain is found at 1 to 146 (MAPVALLSVS…KNHADVAVLT (146 aa)).

Belongs to the PurH family.

It carries out the reaction (6R)-10-formyltetrahydrofolate + 5-amino-1-(5-phospho-beta-D-ribosyl)imidazole-4-carboxamide = 5-formamido-1-(5-phospho-D-ribosyl)imidazole-4-carboxamide + (6S)-5,6,7,8-tetrahydrofolate. It catalyses the reaction IMP + H2O = 5-formamido-1-(5-phospho-D-ribosyl)imidazole-4-carboxamide. It participates in purine metabolism; IMP biosynthesis via de novo pathway; 5-formamido-1-(5-phospho-D-ribosyl)imidazole-4-carboxamide from 5-amino-1-(5-phospho-D-ribosyl)imidazole-4-carboxamide (10-formyl THF route): step 1/1. It functions in the pathway purine metabolism; IMP biosynthesis via de novo pathway; IMP from 5-formamido-1-(5-phospho-D-ribosyl)imidazole-4-carboxamide: step 1/1. The chain is Bifunctional purine biosynthesis protein PurH from Synechococcus sp. (strain CC9605).